The primary structure comprises 695 residues: tRNA wybutosine-synthesizing protein 4 (695 aa).

Residues K38, R88, G115, 146-147 (DY), 196-197 (DL), and E224 each bind S-adenosyl-L-methionine. The active-site Proton donor; for both methylation and methoxycarbonylation activities is R88. Y229 acts as the Proton acceptor; for methoxycarbonylation activity in catalysis.

This sequence belongs to the methyltransferase superfamily. LCMT family.

Its subcellular location is the cytoplasm. The protein resides in the mitochondrion. It catalyses the reaction 7-[(3S)-3-amino-3-carboxypropyl]wyosine(37) in tRNA(Phe) + S-adenosyl-L-methionine = 7-[(3S)-(3-amino-3-methoxycarbonyl)propyl]wyosine(37) in tRNA(Phe) + S-adenosyl-L-homocysteine. The enzyme catalyses 7-[(3S)-(3-amino-3-methoxycarbonyl)propyl]wyosine(37) in tRNA(Phe) + S-adenosyl-L-methionine + CO2 = wybutosine(37) in tRNA(Phe) + S-adenosyl-L-homocysteine + 2 H(+). It functions in the pathway tRNA modification; wybutosine-tRNA(Phe) biosynthesis. Its function is as follows. S-adenosyl-L-methionine-dependent methyltransferase that acts as a component of the wybutosine biosynthesis pathway. Wybutosine is a hyper modified guanosine with a tricyclic base found at the 3'-position adjacent to the anticodon of eukaryotic phenylalanine tRNA. Catalyzes the final 2 independent reactions, methylation of the alpha-carboxy group of wybutosine-72 to form wybutosine-58, and methoxycarbonylation of alpha-amino group of wybutosine-58 through the fixation of CO(2) to complete wybutosine. The protein is tRNA wybutosine-synthesizing protein 4 (PPM2) of Saccharomyces cerevisiae (strain ATCC 204508 / S288c) (Baker's yeast).